The following is a 307-amino-acid chain: Glutaminase (307 aa).

Substrate is bound by residues Ser66, Asn116, Glu160, Asn167, Tyr191, Tyr243, and Val261.

The protein belongs to the glutaminase family. As to quaternary structure, homotetramer.

It catalyses the reaction L-glutamine + H2O = L-glutamate + NH4(+). In Pseudoalteromonas translucida (strain TAC 125), this protein is Glutaminase.